The sequence spans 125 residues: Small ribosomal subunit protein uS13 (125 aa).

The disordered stretch occupies residues 95-125; the sequence is GLPVNGQRTRTNARTRKGGKKTVANKKKVTK. A compositionally biased stretch (basic residues) spans 105-125; that stretch reads TNARTRKGGKKTVANKKKVTK.

It belongs to the universal ribosomal protein uS13 family. Part of the 30S ribosomal subunit. Forms a loose heterodimer with protein S19. Forms two bridges to the 50S subunit in the 70S ribosome.

In terms of biological role, located at the top of the head of the 30S subunit, it contacts several helices of the 16S rRNA. In the 70S ribosome it contacts the 23S rRNA (bridge B1a) and protein L5 of the 50S subunit (bridge B1b), connecting the 2 subunits; these bridges are implicated in subunit movement. Contacts the tRNAs in the A and P-sites. The sequence is that of Small ribosomal subunit protein uS13 from Leptospira interrogans serogroup Icterohaemorrhagiae serovar copenhageni (strain Fiocruz L1-130).